The following is a 277-amino-acid chain: Small ribosomal subunit protein uS2 (277 aa).

Basic and acidic residues-rich tracts occupy residues 227–256 (QARA…RTEA) and 267–277 (SEAKAEGNTEA). Residues 227–277 (QARAERQEAAAKEAAGDADKAPAEAERTEAPAEEAPAEAQSEAKAEGNTEA) are disordered.

This sequence belongs to the universal ribosomal protein uS2 family.

The protein is Small ribosomal subunit protein uS2 of Corynebacterium jeikeium (strain K411).